The chain runs to 408 residues: Aminopeptidase T (408 aa).

Residues glutamate 250, glutamate 316, glutamate 340, histidine 345, histidine 376, and aspartate 378 each contribute to the a divalent metal cation site.

It belongs to the peptidase M29 family. Homodimer. It depends on Co(2+) as a cofactor. Zn(2+) serves as cofactor. Mg(2+) is required as a cofactor.

Its function is as follows. Metal-dependent exopeptidase. This is Aminopeptidase T from Thermus thermophilus (strain ATCC 27634 / DSM 579 / HB8).